We begin with the raw amino-acid sequence, 68 residues long: Conotoxin Cal12.1p3 (68 aa).

A propeptide spanning residues 1 to 21 (DLITNSYTRGKPRHVTSWPKL) is cleaved from the precursor.

Contains 4 disulfide bonds. As to expression, expressed by the venom duct.

Its subcellular location is the secreted. The sequence is that of Conotoxin Cal12.1p3 from Californiconus californicus (California cone).